The primary structure comprises 96 residues: Alpha-elapitoxin-Al2b (96 aa).

An N-terminal signal peptide occupies residues 1 to 21 (MKTLLLTLVVVTIVCLDFGGG). 5 disulfides stabilise this stretch: C24–C41, C34–C62, C47–C51, C66–C77, and C78–C83.

Belongs to the three-finger toxin family. Long-chain subfamily. Type II alpha-neurotoxin sub-subfamily. Expressed by the venom gland.

The protein resides in the secreted. Its function is as follows. Potent long-chain postsynaptic neurotoxin. Pseudo-irreversibly inhibits the nicotinic acetylcholine receptor through competitive antagonism. The polypeptide is Alpha-elapitoxin-Al2b (Austrelaps labialis (Pygmy copperhead)).